We begin with the raw amino-acid sequence, 143 residues long: Flagellar assembly factor FliW (143 aa).

It belongs to the FliW family. As to quaternary structure, interacts with flagellin in a 1:1 complex. Two molecules interact with each CsrA dimer; cannot interact with both flagellin and CsrA simultaneously. Has a higher affinity for CsrA than for flagellin. Interacts directly with flagellin (hag), forms a 3-way complex of Hag, FliS and FliW in which Flis and FliW do not directly interact. Interaction with Hag may occur via the C-terminus of Hag.

It is found in the cytoplasm. Functionally, acts as an anti-CsrA protein, binds CsrA and prevents it from repressing translation of its target genes, one of which is flagellin. Binds to flagellin (hag), which is implicated in polymerization, and participates in the assembly of the flagellum. An antagonist to translational regulator CsrA, it binds CsrA at an allosteric site and non-competitively inhibits CsrA binding to hag RNA. Partner switching by flagellin between FliW and CsrA provides a flagellar assembly checkpoint to tightly control the timing of flagellin synthesis. Flagellin binds to assembly factor FliW, freeing translation regulator CsrA to repress translation of the flagellin mRNA. When the flagellar hook is assembled flagellin is secreted, depleting intracellular flagellin, which frees FliW to interact with CsrA and inhibits CsrA binding to mRNA. This derepresses flagellin translation and provides protein for flagellar assembly. Once the flagellar filament is completed cytoplasmic flagellin levels rise and CsrA translation repression of flagellin reinitiates. Binds to CsrA and displaces it from hag mRNA. Binds to hag mRNA itself, but only at much higher concentrations than those required to displace CsrA. The sequence is that of Flagellar assembly factor FliW from Bacillus subtilis (strain 168).